Reading from the N-terminus, the 299-residue chain is MREIIDGKLVARGLLDRLRVSVDRLKAEHGIVPHLVVVIVGDDPASKLYVGNKQRKAEELGLQSRTIALEHDTSQEELLRIIDELNRDAAVHGILVQLPLPRHIDKELVINAISPEKDVDGFHNANAGKLATGQLDCMIPCTPQGCIHLIKTVKQDLAGSNAVVVGRSNIVGKPVALLLLYENCTVTVLHSASRNLEEHCLRADIIVAAVGKARFIRASWIKPGAIVVDVGINLVEESGKKRFVGDVEFEGLQDVPCSVTPVPGGVGPMTIAFLLVNTVLGSCKQCGVSYEDIKSSLLQ.

Residues 166 to 168 (GRS), serine 191, and isoleucine 232 each bind NADP(+).

It belongs to the tetrahydrofolate dehydrogenase/cyclohydrolase family. Homodimer.

It catalyses the reaction (6R)-5,10-methylene-5,6,7,8-tetrahydrofolate + NADP(+) = (6R)-5,10-methenyltetrahydrofolate + NADPH. The enzyme catalyses (6R)-5,10-methenyltetrahydrofolate + H2O = (6R)-10-formyltetrahydrofolate + H(+). Its pathway is one-carbon metabolism; tetrahydrofolate interconversion. Catalyzes the oxidation of 5,10-methylenetetrahydrofolate to 5,10-methenyltetrahydrofolate and then the hydrolysis of 5,10-methenyltetrahydrofolate to 10-formyltetrahydrofolate. This Anaplasma marginale (strain St. Maries) protein is Bifunctional protein FolD.